The primary structure comprises 4543 residues: Low-density lipoprotein receptor-related protein 1 (4543 aa).

A signal peptide spans 1–21 (MGPLLALAGCLLALLAAPAAR). Residues 22-4419 (ALEAPKTCSP…EFIVGEQQSG (4398 aa)) are Extracellular-facing. LDL-receptor class A domains lie at 27–68 (KTCS…ICPQ) and 72–112 (SRCQ…HCRE). 6 cysteine pairs are disulfide-bonded: cysteine 29–cysteine 42, cysteine 36–cysteine 55, cysteine 49–cysteine 66, cysteine 74–cysteine 87, cysteine 81–cysteine 100, and cysteine 94–cysteine 110. Residues 113–151 (QLANCTALGCQHHCVPTLSGPACYCNNSFQLAEDRRSCK) enclose the EGF-like 1 domain. The N-linked (GlcNAc...) asparagine glycan is linked to asparagine 116. 6 cysteine pairs are disulfide-bonded: cysteine 117/cysteine 126, cysteine 122/cysteine 135, cysteine 137/cysteine 150, cysteine 156/cysteine 166, cysteine 162/cysteine 175, and cysteine 177/cysteine 190. N-linked (GlcNAc...) asparagine glycosylation occurs at asparagine 138. Residues 152–191 (DFDECTVYGTCSQTCTNTEGSYTCSCVEGYLLQPDNRSCK) form the EGF-like 2; calcium-binding domain. Asparagine 187 and asparagine 276 each carry an N-linked (GlcNAc...) asparagine glycan. LDL-receptor class B repeat units follow at residues 294–336 (GNFY…DPAM), 337–380 (GKVF…DLVS), and 381–424 (RLVY…FENY). N-linked (GlcNAc...) asparagine glycosylation occurs at asparagine 359. Asparagine 448 is a glycosylation site (N-linked (GlcNAc...) asparagine). Residues 476–522 (RSHACEPDQFGKPGGCSDICLLGNSHKSRTCRCRSGFSLGSDGKSCK) form the EGF-like 3 domain. Cystine bridges form between cysteine 480/cysteine 495, cysteine 491/cysteine 506, and cysteine 508/cysteine 521. 4 LDL-receptor class B repeats span residues 573–615 (GFIY…DWMG), 616–661 (NNLY…DPLN), 662–712 (GWMY…DIPA), and 713–756 (KILY…YSSF). Asparagine 731 carries N-linked (GlcNAc...) asparagine glycosylation. In terms of domain architecture, EGF-like 4 spans 801-841 (GSNKCRVNNGGCSSLCLATPRGRQCACAEDQILGADSVTCE). 33 disulfide bridges follow: cysteine 805-cysteine 816, cysteine 812-cysteine 825, cysteine 827-cysteine 840, cysteine 852-cysteine 864, cysteine 859-cysteine 877, cysteine 871-cysteine 888, cysteine 893-cysteine 905, cysteine 900-cysteine 918, cysteine 912-cysteine 929, cysteine 934-cysteine 946, cysteine 941-cysteine 959, cysteine 953-cysteine 969, cysteine 974-cysteine 987, cysteine 982-cysteine 1000, cysteine 994-cysteine 1009, cysteine 1013-cysteine 1025, cysteine 1020-cysteine 1038, cysteine 1032-cysteine 1049, cysteine 1060-cysteine 1073, cysteine 1067-cysteine 1086, cysteine 1080-cysteine 1095, cysteine 1102-cysteine 1116, cysteine 1110-cysteine 1129, cysteine 1123-cysteine 1138, cysteine 1143-cysteine 1157, cysteine 1150-cysteine 1170, cysteine 1164-cysteine 1180, cysteine 1183-cysteine 1194, cysteine 1190-cysteine 1204, cysteine 1206-cysteine 1219, cysteine 1225-cysteine 1235, cysteine 1231-cysteine 1244, and cysteine 1246-cysteine 1259. 8 consecutive LDL-receptor class A domains span residues 850-890 (PQCQ…LCHQ), 891-931 (HTCP…TCSA), 932-971 (RTCS…SCAY), 972-1011 (PTCF…GCSH), 1011-1051 (HSCS…NCTN), 1058-1097 (GGCH…NCEG), 1100-1140 (HVCD…NCES), and 1141-1180 (LVCK…GELC). Positions 869, 872, 874, 876, 882, and 883 each coordinate Ca(2+). Asparagine 926 carries an N-linked (GlcNAc...) asparagine glycan. Residues tryptophan 1030, aspartate 1033, aspartate 1035, aspartate 1037, aspartate 1043, and glutamate 1044 each coordinate Ca(2+). N-linked (GlcNAc...) asparagine glycosylation occurs at asparagine 1048. Residues tryptophan 1078, aspartate 1081, aspartate 1083, aspartate 1085, aspartate 1091, and glutamate 1092 each contribute to the Ca(2+) site. Residues asparagine 1152 and asparagine 1153 are each glycosylated (N-linked (GlcNAc...) asparagine). EGF-like domains lie at 1181-1220 (DQCS…KTCQ) and 1221-1260 (IQSY…ESCR). N-linked (GlcNAc...) asparagine glycans are attached at residues asparagine 1193 and asparagine 1216. Asparagine 1305 carries an N-linked (GlcNAc...) asparagine glycan. LDL-receptor class B repeat units follow at residues 1307-1353 (SSLY…DWIA), 1354-1396 (GNIY…DPRY), 1397-1443 (GILF…DYLE), 1444-1488 (KRIL…YGGE), and 1489-1529 (VYWT…YHPS). The N-linked (GlcNAc...) asparagine glycan is linked to asparagine 1509. Residues 1534-1577 (APNPCEANGGKGPCSHLCLINYNRTLSCACPHLMKLDKDNTTCY) enclose the EGF-like 7 domain. Disulfide bonds link cysteine 1538–cysteine 1551, cysteine 1547–cysteine 1561, and cysteine 1563–cysteine 1576. 4 N-linked (GlcNAc...) asparagine glycosylation sites follow: asparagine 1556, asparagine 1573, asparagine 1614, and asparagine 1643. LDL-receptor class B repeat units lie at residues 1625–1667 (QRIY…DWVS), 1668–1711 (RNLF…HPLH), 1712–1751 (GKLY…DYPE), and 1752–1796 (SKLY…MGDK). N-linked (GlcNAc...) asparagine glycosylation is found at asparagine 1721, asparagine 1731, asparagine 1761, and asparagine 1823. The EGF-like 8 domain occupies 1842–1883 (GSNPCSVNNGDCSQLCLPTSETSRSCMCTAGYSLKSGQQSCE). Cystine bridges form between cysteine 1846–cysteine 1857, cysteine 1853–cysteine 1867, and cysteine 1869–cysteine 1882. N-linked (GlcNAc...) asparagine glycosylation is present at asparagine 1929. LDL-receptor class B repeat units follow at residues 1930–1972 (DTIY…DWIA), 1973–2015 (GNIY…HPEK), 2016–2059 (GYLF…DYED), and 2060–2103 (GKLY…FEDY). Residues asparagine 1991 and asparagine 2044 are each glycosylated (N-linked (GlcNAc...) asparagine). N-linked (GlcNAc...) asparagine glycosylation is found at asparagine 2113 and asparagine 2123. An EGF-like 9 domain is found at 2151–2191 (GTNVCAQNNGGCQQLCLFRGGGRRTCACAHGMLSEDGVSCR). 3 disulfides stabilise this stretch: cysteine 2155–cysteine 2166, cysteine 2162–cysteine 2176, and cysteine 2178–cysteine 2190. LDL-receptor class B repeat units lie at residues 2247-2288 (NRIF…HRGW), 2289-2337 (DTLY…DECQ), 2338-2382 (NLMF…DHRA), 2383-2425 (EKIY…YGDY), and 2426-2467 (IFWT…VAND). A glycan (N-linked (GlcNAc...) asparagine) is linked at asparagine 2466. Residues 2472 to 2512 (ELSPCRVNNGGCQDLCLLTPKGHVNCSCRGERVLQEDFTCK) form the EGF-like 10 domain. Disulfide bonds link cysteine 2476–cysteine 2487, cysteine 2483–cysteine 2497, and cysteine 2499–cysteine 2511. Asparagine 2496 carries N-linked (GlcNAc...) asparagine glycosylation. A glycan (N-linked (GlcNAc...) asparagine) is linked at asparagine 2515. LDL-receptor class A domains lie at 2516–2557 (STCN…YCSS), 2558–2596 (RKCK…PCNK), 2597–2635 (TSCA…NCTA), 2636–2684 (TDCS…NCPG), 2688–2730 (PKCP…RQDK), 2730–2769 (KFCY…RCRL), and 2770–2812 (TTCS…GCLY). 6 disulfides stabilise this stretch: cysteine 2518–cysteine 2531, cysteine 2526–cysteine 2544, cysteine 2538–cysteine 2555, cysteine 2560–cysteine 2572, cysteine 2567–cysteine 2585, and cysteine 2579–cysteine 2594. Asparagine 2595 is a glycosylation site (N-linked (GlcNAc...) asparagine). 15 disulfide bridges follow: cysteine 2599-cysteine 2611, cysteine 2606-cysteine 2624, cysteine 2618-cysteine 2633, cysteine 2638-cysteine 2660, cysteine 2654-cysteine 2673, cysteine 2667-cysteine 2682, cysteine 2690-cysteine 2702, cysteine 2697-cysteine 2715, cysteine 2709-cysteine 2724, cysteine 2732-cysteine 2744, cysteine 2739-cysteine 2757, cysteine 2751-cysteine 2767, cysteine 2772-cysteine 2785, cysteine 2779-cysteine 2798, and cysteine 2792-cysteine 2810. N-linked (GlcNAc...) asparagine glycosylation is found at asparagine 2614 and asparagine 2632. Asparagine 2813 is a glycosylation site (N-linked (GlcNAc...) asparagine). LDL-receptor class A domains lie at 2814–2853 (NTCD…ECEY), 2854–2897 (PTCG…RCSS), and 2900–2938 (SKCN…NCFI). Disulfide bonds link cysteine 2816-cysteine 2828, cysteine 2823-cysteine 2841, cysteine 2835-cysteine 2851, cysteine 2856-cysteine 2868, cysteine 2863-cysteine 2882, cysteine 2876-cysteine 2895, cysteine 2902-cysteine 2914, cysteine 2909-cysteine 2927, cysteine 2921-cysteine 2936, cysteine 2941-cysteine 2953, cysteine 2949-cysteine 2962, cysteine 2964-cysteine 2977, cysteine 2983-cysteine 2993, cysteine 2989-cysteine 3002, and cysteine 3004-cysteine 3018. N-linked (GlcNAc...) asparagine glycosylation is present at asparagine 2903. Positions 2939–2978 (NECLNKKLSGCSQECEDLKIGYKCRCRPGFRLKDDGKTCI) constitute an EGF-like 11 domain. Positions 2979-3019 (DIDECSTTYPCSQKCINTLGSYKCLCIEGYKLKPDNPTSCK) constitute an EGF-like 12; calcium-binding domain. Asparagine 3045 and asparagine 3086 each carry an N-linked (GlcNAc...) asparagine glycan. LDL-receptor class B repeat units follow at residues 3066–3110 (QMIY…DWVG), 3111–3153 (GNLY…DVQN), 3154–3197 (GYLY…DYIN), 3198–3240 (SRIY…FEDY), and 3241–3281 (IYWT…YHPY). Asparagine 3176 carries an N-linked (GlcNAc...) asparagine glycan. Asparagine 3261 carries N-linked (GlcNAc...) asparagine glycosylation. In terms of domain architecture, EGF-like 13 spans 3287 to 3328 (PNHPCKTNNAGCSNLCLLSPGGGHKCACPTNFYLGSDGKTCV). Cystine bridges form between cysteine 3291–cysteine 3302, cysteine 3298–cysteine 3312, and cysteine 3314–cysteine 3327. LDL-receptor class A domains follow at residues 3329-3368 (SNCT…DCPE), 3369-3407 (FKCR…NCDI), 3408-3447 (HVCL…DCPE), 3448-3488 (VTCA…NCTQ), 3489-3530 (MTCG…ECDE), 3531-3569 (RTCE…SCTP), 3570-3608 (RPCS…DCIP), 3608-3646 (PRCE…DCGT), 3649-3689 (RTCP…ECLK), 3690-3730 (FQCP…DCES), and 3736-3776 (KSCS…SCSH). N-linked (GlcNAc...) asparagine glycosylation occurs at asparagine 3330. 38 disulfide bridges follow: cysteine 3331–cysteine 3343, cysteine 3338–cysteine 3356, cysteine 3350–cysteine 3366, cysteine 3371–cysteine 3383, cysteine 3378–cysteine 3396, cysteine 3390–cysteine 3405, cysteine 3410–cysteine 3423, cysteine 3417–cysteine 3436, cysteine 3430–cysteine 3445, cysteine 3450–cysteine 3463, cysteine 3457–cysteine 3476, cysteine 3470–cysteine 3486, cysteine 3491–cysteine 3504, cysteine 3498–cysteine 3517, cysteine 3511–cysteine 3528, cysteine 3533–cysteine 3545, cysteine 3540–cysteine 3558, cysteine 3552–cysteine 3567, cysteine 3572–cysteine 3584, cysteine 3579–cysteine 3597, cysteine 3591–cysteine 3606, cysteine 3610–cysteine 3622, cysteine 3617–cysteine 3635, cysteine 3629–cysteine 3644, cysteine 3658–cysteine 3676, cysteine 3670–cysteine 3687, cysteine 3692–cysteine 3706, cysteine 3700–cysteine 3719, cysteine 3713–cysteine 3728, cysteine 3738–cysteine 3752, cysteine 3747–cysteine 3765, cysteine 3759–cysteine 3774, cysteine 3783–cysteine 3796, cysteine 3790–cysteine 3805, cysteine 3807–cysteine 3820, cysteine 3826–cysteine 3836, cysteine 3832–cysteine 3845, and cysteine 3847–cysteine 3858. An N-linked (GlcNAc...) asparagine glycan is attached at asparagine 3485. An N-linked (GlcNAc...) asparagine glycan is attached at asparagine 3659. EGF-like domains are found at residues 3779–3821 (KSYD…NSCQ) and 3822–3859 (DVNE…NMCK). An N-linked (GlcNAc...) asparagine glycan is attached at asparagine 3786. N-linked (GlcNAc...) asparagine glycosylation is present at asparagine 3837. 4 LDL-receptor class B repeats span residues 3910–3952 (NKIY…THLN), 3969–4011 (GNIY…DPLR), 4012–4055 (GTMY…DYHN), and 4056–4100 (ERLY…FEDY). The Recognition site for proteolytical processing motif lies at 3939-3942 (RNRR). The N-linked (GlcNAc...) asparagine glycan is linked to asparagine 3952. N-linked (GlcNAc...) asparagine glycans are attached at residues asparagine 4074 and asparagine 4124. EGF-like domains are found at residues 4146-4182 (VTNP…GTCV), 4195-4231 (TTDT…ERCQ), 4231-4267 (QINQ…SRCD), 4267-4303 (DQQV…DRCQ), 4303-4339 (QYQQ…AQCQ), 4339-4374 (QDNK…PSCL), and 4372-4409 (SCLT…MRCE). Disulfide bonds link cysteine 4150/cysteine 4159, cysteine 4155/cysteine 4168, cysteine 4170/cysteine 4181, cysteine 4199/cysteine 4209, cysteine 4203/cysteine 4219, cysteine 4221/cysteine 4230, cysteine 4235/cysteine 4245, cysteine 4239/cysteine 4255, cysteine 4257/cysteine 4266, cysteine 4271/cysteine 4281, cysteine 4275/cysteine 4291, cysteine 4293/cysteine 4302, cysteine 4307/cysteine 4317, cysteine 4311/cysteine 4327, cysteine 4329/cysteine 4338, cysteine 4343/cysteine 4351, cysteine 4346/cysteine 4362, cysteine 4364/cysteine 4373, cysteine 4376/cysteine 4386, cysteine 4380/cysteine 4397, and cysteine 4399/cysteine 4408. An N-linked (GlcNAc...) asparagine glycan is attached at asparagine 4178. The N-linked (GlcNAc...) asparagine glycan is linked to asparagine 4278. A helical membrane pass occupies residues 4420-4443 (RTASIVIPILLLLLLLAVVAFAWY). The Cytoplasmic segment spans residues 4444–4543 (KWRIKGAKGF…ADDDLTDPLA (100 aa)). The NPXY motif signature appears at 4501–4506 (FTNPVY). Positions 4522–4543 (STDEKRELLARGADDDLTDPLA) are disordered. Residues 4523–4535 (TDEKRELLARGAD) show a composition bias toward basic and acidic residues.

The protein belongs to the LDLR family. As to quaternary structure, binds vitellogenin and LRPAP1 (alpha 2-macroglobulin). Post-translationally, cleaved into a 85 kDa membrane-spanning subunit (LRP-85) and a 515 kDa large extracellular domain (LRP-515) that remains non-covalently associated. Somatic.

The protein resides in the membrane. The protein localises to the coated pit. Functionally, endocytic receptor involved in endocytosis and in phagocytosis of apoptotic cells. Involved in cellular lipid homeostasis. Involved in the plasma clearance of chylomicron remnants and activated LRPAP1 (alpha 2-macroglobulin), as well as the local metabolism of complexes between plasminogen activators and their endogenous inhibitors. Acts as an alpha-2-macroglobulin receptor. In Gallus gallus (Chicken), this protein is Low-density lipoprotein receptor-related protein 1 (LRP1).